The sequence spans 176 residues: ATP-dependent protease subunit HslV (176 aa).

Residue threonine 5 is part of the active site. Serine 161, cysteine 164, and threonine 167 together coordinate Na(+).

Belongs to the peptidase T1B family. HslV subfamily. In terms of assembly, a double ring-shaped homohexamer of HslV is capped on each side by a ring-shaped HslU homohexamer. The assembly of the HslU/HslV complex is dependent on binding of ATP.

The protein resides in the cytoplasm. The enzyme catalyses ATP-dependent cleavage of peptide bonds with broad specificity.. Its activity is regulated as follows. Allosterically activated by HslU binding. In terms of biological role, protease subunit of a proteasome-like degradation complex believed to be a general protein degrading machinery. This is ATP-dependent protease subunit HslV from Desulfitobacterium hafniense (strain DSM 10664 / DCB-2).